Here is a 219-residue protein sequence, read N- to C-terminus: Ribose-5-phosphate isomerase A (219 aa).

Residues 28–31 (SGST), 81–84 (DGAD), and 94–97 (KGGG) each bind substrate. Glu103 acts as the Proton acceptor in catalysis. Lys121 is a binding site for substrate.

The protein belongs to the ribose 5-phosphate isomerase family. Homodimer.

The enzyme catalyses aldehydo-D-ribose 5-phosphate = D-ribulose 5-phosphate. It functions in the pathway carbohydrate degradation; pentose phosphate pathway; D-ribose 5-phosphate from D-ribulose 5-phosphate (non-oxidative stage): step 1/1. Catalyzes the reversible conversion of ribose-5-phosphate to ribulose 5-phosphate. This Haemophilus influenzae (strain ATCC 51907 / DSM 11121 / KW20 / Rd) protein is Ribose-5-phosphate isomerase A.